Here is a 545-residue protein sequence, read N- to C-terminus: Chaperonin GroEL (545 aa).

Residues 30-33, Lys-51, 87-91, Gly-415, and Asp-496 each bind ATP; these read TLGP and DGTTT.

Belongs to the chaperonin (HSP60) family. Forms a cylinder of 14 subunits composed of two heptameric rings stacked back-to-back. Interacts with the co-chaperonin GroES.

The protein localises to the cytoplasm. It carries out the reaction ATP + H2O + a folded polypeptide = ADP + phosphate + an unfolded polypeptide.. In terms of biological role, together with its co-chaperonin GroES, plays an essential role in assisting protein folding. The GroEL-GroES system forms a nano-cage that allows encapsulation of the non-native substrate proteins and provides a physical environment optimized to promote and accelerate protein folding. The protein is Chaperonin GroEL of Haemophilus influenzae (strain 86-028NP).